Here is a 449-residue protein sequence, read N- to C-terminus: 23S rRNA (uracil(1939)-C(5))-methyltransferase RlmD (449 aa).

Residues 12–70 form the TRAM domain; that stretch reads SKQLSAKQSFSVHQLDHLGAGIAQHQGKVVFIPGALPSETVQAQLTEQKKNYARAKLIK. Positions 83, 89, 92, and 170 each coordinate [4Fe-4S] cluster. S-adenosyl-L-methionine is bound by residues Gln-282, Phe-311, Asn-316, Glu-332, Asp-359, and Asp-379. Catalysis depends on Cys-405, which acts as the Nucleophile.

The protein belongs to the class I-like SAM-binding methyltransferase superfamily. RNA M5U methyltransferase family. RlmD subfamily.

It catalyses the reaction uridine(1939) in 23S rRNA + S-adenosyl-L-methionine = 5-methyluridine(1939) in 23S rRNA + S-adenosyl-L-homocysteine + H(+). Catalyzes the formation of 5-methyl-uridine at position 1939 (m5U1939) in 23S rRNA. This Shewanella sp. (strain MR-4) protein is 23S rRNA (uracil(1939)-C(5))-methyltransferase RlmD.